The following is a 502-amino-acid chain: Dynein regulatory complex subunit 2 (502 aa).

2 coiled-coil regions span residues 96-160 and 252-285; these read DSVI…RKAI and EKSS…HSRE.

The protein belongs to the DRC2 family. As to quaternary structure, component of the nexin-dynein regulatory complex (N-DRC). Interacts with DRC1.

The protein localises to the cytoplasm. It localises to the cytoskeleton. It is found in the flagellum basal body. Its subcellular location is the cell projection. The protein resides in the cilium. The protein localises to the flagellum. It localises to the flagellum axoneme. Its function is as follows. Component of the nexin-dynein regulatory complex (N-DRC), a key regulator of ciliary/flagellar motility which maintains the alignment and integrity of the distal axoneme and regulates microtubule sliding in motile axonemes. Plays a critical role in the assembly of N-DRC and also stabilizes the assembly of multiple inner dynein arms and radial spokes. Coassembles with DRC1 to form a central scaffold needed for assembly of the N-DRC and its attachment to the outer doublet microtubules. The chain is Dynein regulatory complex subunit 2 (Ccdc65) from Rattus norvegicus (Rat).